The chain runs to 249 residues: DNA polymerase sliding clamp 3 (249 aa).

Belongs to the PCNA family. Homotrimer. The subunits circularize to form a toroid; DNA passes through its center. Replication factor C (RFC) is required to load the toroid on the DNA.

In terms of biological role, sliding clamp subunit that acts as a moving platform for DNA processing. Responsible for tethering the catalytic subunit of DNA polymerase and other proteins to DNA during high-speed replication. This Aeropyrum pernix (strain ATCC 700893 / DSM 11879 / JCM 9820 / NBRC 100138 / K1) protein is DNA polymerase sliding clamp 3.